The primary structure comprises 2283 residues: DNA polymerase epsilon catalytic subunit A (2283 aa).

Residues 1–32 (MVLRNSGRRHPEPGADGEGSRDDGPSSSVSAL) form a disordered region. The segment covering 9-24 (RHPEPGADGEGSRDDG) has biased composition (basic and acidic residues). Residues serine 1184, serine 1296, and serine 1316 each carry the phosphoserine modification. 2 disordered regions span residues 1935–1968 (GQVK…GESE) and 2014–2041 (HSAP…TGSL). Positions 1936 to 1946 (QVKEQDSQARE) are enriched in basic and acidic residues. Residues 1947-1968 (ETDEEEEDKEKDEEEEGMGESE) show a composition bias toward acidic residues. Residues 2028–2037 (SQFSQESEGA) are compositionally biased toward polar residues. 4 residues coordinate Zn(2+): cysteine 2155, cysteine 2158, cysteine 2184, and cysteine 2187. The CysA-type zinc-finger motif lies at 2155-2187 (CHSCNFCRDLDLCKDSSFSQDGAILPQWLCSNC). [4Fe-4S] cluster-binding residues include cysteine 2218, cysteine 2221, cysteine 2233, and cysteine 2235. The CysB motif motif lies at 2218–2235 (CLKCRGMKETHMPVYCSC).

Belongs to the DNA polymerase type-B family. Component of the DNA polymerase epsilon complex consisting of four subunits: the catalytic subunit POLE and the accessory subunits POLE2, POLE3 and POLE4. Interacts with RAD17 and TOPBP1. It depends on [4Fe-4S] cluster as a cofactor.

The protein resides in the nucleus. It catalyses the reaction DNA(n) + a 2'-deoxyribonucleoside 5'-triphosphate = DNA(n+1) + diphosphate. Its function is as follows. Catalytic component of the DNA polymerase epsilon complex. Participates in chromosomal DNA replication. Required during synthesis of the leading DNA strands at the replication fork and binds at/or near replication origins and moves along DNA with the replication fork. Has 3'-5' proofreading exonuclease activity that corrects errors arising during DNA replication. It is also involved in DNA synthesis during DNA repair. In Mus musculus (Mouse), this protein is DNA polymerase epsilon catalytic subunit A (Pole).